The sequence spans 494 residues: Sulfate adenylyltransferase subunit 1 (494 aa).

In terms of domain architecture, tr-type G spans 24-240 (TRPLRLITCG…LELATVRSAQ (217 aa)). Positions 33-40 (GSVDDGKS) are G1. Position 33-40 (33-40 (GSVDDGKS)) interacts with GTP. Residues 91–95 (GITID) form a G2 region. Residues 112 to 115 (DTPG) form a G3 region. GTP-binding positions include 112 to 116 (DTPGH) and 167 to 170 (NKID). Residues 167 to 170 (NKID) form a G4 region. The interval 204–206 (SAL) is G5.

Belongs to the TRAFAC class translation factor GTPase superfamily. Classic translation factor GTPase family. CysN/NodQ subfamily. As to quaternary structure, heterodimer composed of CysD, the smaller subunit, and CysN.

It catalyses the reaction sulfate + ATP + H(+) = adenosine 5'-phosphosulfate + diphosphate. The protein operates within sulfur metabolism; hydrogen sulfide biosynthesis; sulfite from sulfate: step 1/3. With CysD forms the ATP sulfurylase (ATPS) that catalyzes the adenylation of sulfate producing adenosine 5'-phosphosulfate (APS) and diphosphate, the first enzymatic step in sulfur assimilation pathway. APS synthesis involves the formation of a high-energy phosphoric-sulfuric acid anhydride bond driven by GTP hydrolysis by CysN coupled to ATP hydrolysis by CysD. The polypeptide is Sulfate adenylyltransferase subunit 1 (Rhizobium tropici).